The sequence spans 783 residues: Endonuclease MutS2 (783 aa).

Gly328–Thr335 contributes to the ATP binding site. Residues Leu708–Gly783 form the Smr domain.

Belongs to the DNA mismatch repair MutS family. MutS2 subfamily. In terms of assembly, homodimer. Binds to stalled ribosomes, contacting rRNA.

Endonuclease that is involved in the suppression of homologous recombination and thus may have a key role in the control of bacterial genetic diversity. In terms of biological role, acts as a ribosome collision sensor, splitting the ribosome into its 2 subunits. Detects stalled/collided 70S ribosomes which it binds and splits by an ATP-hydrolysis driven conformational change. Acts upstream of the ribosome quality control system (RQC), a ribosome-associated complex that mediates the extraction of incompletely synthesized nascent chains from stalled ribosomes and their subsequent degradation. Probably generates substrates for RQC. This is Endonuclease MutS2 from Streptococcus thermophilus (strain ATCC BAA-491 / LMD-9).